The following is a 751-amino-acid chain: Cytosolic neutral trehalase (751 aa).

Residues 1–15 (MDDSALPSNTSNGIN) are compositionally biased toward polar residues. 2 disordered regions span residues 1–42 (MDDS…NPES) and 64–88 (DFHE…NPRK). The span at 64-78 (DFHEMLGDRNTRRGS) shows a compositional bias: basic and acidic residues. The Ca(2+) site is built by D105, D107, N109, Q111, and D116. Residues R292, 299–300 (WD), N336, 345–347 (RSQ), E412, R461, and G464 contribute to the substrate site. Residues D466 and E670 each act as proton donor/acceptor in the active site.

It belongs to the glycosyl hydrolase 37 family. The cofactor is Ca(2+).

The protein localises to the cytoplasm. It catalyses the reaction alpha,alpha-trehalose + H2O = alpha-D-glucose + beta-D-glucose. The protein operates within carbohydrate degradation. Activated by calcium. Hydrolyzes intracellular trehalose to glucose. The disaccharide trehalose serves as a storage carbohydrate that is mobilized during conidial germination. Regulates the level of trehalose as a protectant for cell integrity during heat stress. This is Cytosolic neutral trehalase from Emericella nidulans (strain FGSC A4 / ATCC 38163 / CBS 112.46 / NRRL 194 / M139) (Aspergillus nidulans).